Reading from the N-terminus, the 476-residue chain is Eukaryotic translation initiation factor 3 subunit L (476 aa).

Residues 257–452 (DAIRMFSHIL…DLDYALEKDL (196 aa)) enclose the PCI domain.

Belongs to the eIF-3 subunit L family. Component of the eukaryotic translation initiation factor 3 (eIF-3) complex.

It localises to the cytoplasm. Its function is as follows. Component of the eukaryotic translation initiation factor 3 (eIF-3) complex, which is involved in protein synthesis of a specialized repertoire of mRNAs and, together with other initiation factors, stimulates binding of mRNA and methionyl-tRNAi to the 40S ribosome. The eIF-3 complex specifically targets and initiates translation of a subset of mRNAs involved in cell proliferation. The protein is Eukaryotic translation initiation factor 3 subunit L of Aspergillus terreus (strain NIH 2624 / FGSC A1156).